The following is a 132-amino-acid chain: CLAVATA3/ESR (CLE)-related protein 2-B (132 aa).

The N-terminal stretch at 1–26 (MASRMGMVAILSLFVCALVASTSVNA) is a signal peptide. The tract at residues 68–132 (NRASKQLDRE…IGPPPFLDRY (65 aa)) is disordered. Residues Pro82 and Pro85 each carry the hydroxyproline modification. O-linked (Ara...) hydroxyproline glycosylation occurs at Pro85.

The protein belongs to the CLV3/ESR signal peptide family. In terms of processing, the O-glycosylation (arabinosylation) of the hydroxyproline Pro-85 enhances binding affinity of the ESR2Bp peptide for its receptor. In terms of tissue distribution, seed endosperm.

The protein resides in the secreted. It localises to the extracellular space. Its function is as follows. Extracellular signal peptide that regulates cell fate. This Zea mays (Maize) protein is CLAVATA3/ESR (CLE)-related protein 2-B.